Consider the following 312-residue polypeptide: Porphobilinogen deaminase (312 aa).

S-(dipyrrolylmethanemethyl)cysteine is present on Cys-243.

It belongs to the HMBS family. In terms of assembly, monomer. The cofactor is dipyrromethane.

The enzyme catalyses 4 porphobilinogen + H2O = hydroxymethylbilane + 4 NH4(+). It participates in porphyrin-containing compound metabolism; protoporphyrin-IX biosynthesis; coproporphyrinogen-III from 5-aminolevulinate: step 2/4. Functionally, tetrapolymerization of the monopyrrole PBG into the hydroxymethylbilane pre-uroporphyrinogen in several discrete steps. The sequence is that of Porphobilinogen deaminase from Vibrio parahaemolyticus serotype O3:K6 (strain RIMD 2210633).